The chain runs to 76 residues: uncharacterized protein (76 aa).

An HTH cro/C1-type domain is found at Val15–Leu69. Residues Gln26–Ala45 constitute a DNA-binding region (H-T-H motif).

This is an uncharacterized protein from Sinorhizobium fredii (strain NBRC 101917 / NGR234).